Consider the following 571-residue polypeptide: Oxysterol-binding protein 11 (571 aa).

The segment at Met1–Asp73 is disordered. Over residues Asn33–Ala42 the composition is skewed to polar residues. A compositionally biased stretch (low complexity) spans Ser43 to Asp54. Residues Tyr387–Ile420 adopt a coiled-coil conformation.

It belongs to the OSBP family.

The protein is Oxysterol-binding protein 11 (osbK) of Dictyostelium discoideum (Social amoeba).